Consider the following 501-residue polypeptide: Phenylalanine--tRNA ligase alpha subunit (501 aa).

2 residues coordinate L-phenylalanine: Thr-340 and Phe-423. Mg(2+) is bound at residue Glu-425. Position 448 (Phe-448) interacts with L-phenylalanine.

This sequence belongs to the class-II aminoacyl-tRNA synthetase family. Phe-tRNA synthetase alpha subunit type 2 subfamily. In terms of assembly, tetramer of two alpha and two beta subunits. The cofactor is Mg(2+).

The protein localises to the cytoplasm. It carries out the reaction tRNA(Phe) + L-phenylalanine + ATP = L-phenylalanyl-tRNA(Phe) + AMP + diphosphate + H(+). The sequence is that of Phenylalanine--tRNA ligase alpha subunit from Methanococcus maripaludis (strain C5 / ATCC BAA-1333).